A 488-amino-acid chain; its full sequence is Ribulose bisphosphate carboxylase large chain (488 aa).

The substrate site is built by Asn127 and Thr177. The active-site Proton acceptor is Lys179. Substrate is bound at residue Lys181. Mg(2+) is bound by residues Lys205, Asp207, and Glu208. An N6-carboxylysine modification is found at Lys205. The Proton acceptor role is filled by His297. Positions 298, 330, and 382 each coordinate substrate.

Belongs to the RuBisCO large chain family. Type I subfamily. As to quaternary structure, heterohexadecamer of 8 large chains and 8 small chains. The cofactor is Mg(2+).

It is found in the plastid. The protein resides in the chloroplast. The enzyme catalyses 2 (2R)-3-phosphoglycerate + 2 H(+) = D-ribulose 1,5-bisphosphate + CO2 + H2O. It carries out the reaction D-ribulose 1,5-bisphosphate + O2 = 2-phosphoglycolate + (2R)-3-phosphoglycerate + 2 H(+). In terms of biological role, ruBisCO catalyzes two reactions: the carboxylation of D-ribulose 1,5-bisphosphate, the primary event in carbon dioxide fixation, as well as the oxidative fragmentation of the pentose substrate in the photorespiration process. Both reactions occur simultaneously and in competition at the same active site. The chain is Ribulose bisphosphate carboxylase large chain from Guillardia theta (Cryptophyte).